Consider the following 1024-residue polypeptide: Importin-8 (1024 aa).

The region spanning 22–102 is the Importin N-terminal domain; that stretch reads AENELNQSYK…RENMVEAIIR (81 aa). Residues 896-969 form a disordered region; that stretch reads FGRAQGSEEE…YSTPLDCDNG (74 aa). 2 stretches are compositionally biased toward acidic residues: residues 902–917 and 934–952; these read SEEEENEEIPSDEDEV and DNEDDDDEDDDEYWDDEGL.

It belongs to the importin beta family.

The protein resides in the cytoplasm. It localises to the nucleus. Its function is as follows. Involved in nuclear protein import, either by acting as autonomous nuclear transport receptor or as an adapter-like protein in association with the importin-beta subunit KPNB1. Acting autonomously, may serve as receptor for nuclear localization signals (NLS) and promote translocation of import substrates through the nuclear pore complex (NPC) by an energy requiring, Ran-dependent mechanism. At the nucleoplasmic side of the NPC, Ran binds to importin, the importin/substrate complex dissociates and importin is re-exported from the nucleus to the cytoplasm where GTP hydrolysis releases Ran. The directionality of nuclear import is thought to be conferred by an asymmetric distribution of the GTP- and GDP-bound forms of Ran between the cytoplasm and nucleus. In vitro mediates the nuclear import of the signal recognition particle protein SRP19. May also be involved in cytoplasm-to-nucleus shuttling of a broad spectrum of other cargos, including Argonaute-microRNAs complexes, the JUN protein, RELA/NF-kappa-B p65 subunit, the translation initiation factor EIF4E and a set of receptor-activated mothers against decapentaplegic homolog (SMAD) transcription factors that play a critical role downstream of the large family of transforming growth factor beta and bone morphogenetic protein (BMP) cytokines. The chain is Importin-8 (ipo8) from Danio rerio (Zebrafish).